The following is a 496-amino-acid chain: Cyclin-L1 (496 aa).

Cyclin-like stretches follow at residues 68–170 and 183–267; these read ELIQ…RILK and KIIV…TTLR. A disordered region spans residues 301 to 496; the sequence is NPDGTPAILS…SHSGHGRHRR (196 aa). Positions 322-347 are enriched in basic and acidic residues; that stretch reads SPRDVKTEEKSPNFAKVKREMDDKQS. Basic residues-rich tracts occupy residues 358 to 392, 412 to 426, 434 to 446, and 456 to 468; these read ENKR…RRSR, RRHH…KLKH, RHAH…HSPS, and KKHR…HRER. Residues 363–406 are RS; the sequence is RSVSRSRSRTKSRSRSHSPRRHYNNRRRSRSGTYSSRSRSRSRS. The segment covering 469–478 has biased composition (basic and acidic residues); it reads RERSRSFERS. Positions 479–496 are enriched in basic residues; sequence HKNKHHGSSHSGHGRHRR.

Belongs to the cyclin family. Cyclin L subfamily.

The protein resides in the nucleus speckle. The protein localises to the nucleus. Its subcellular location is the nucleoplasm. Involved in pre-mRNA splicing. This is Cyclin-L1 (ccnl1) from Xenopus laevis (African clawed frog).